Here is a 124-residue protein sequence, read N- to C-terminus: Ribonuclease pancreatic (124 aa).

Positions 1–13 (KETAAAKFERQHM) are enriched in basic and acidic residues. The interval 1 to 24 (KETAAAKFERQHMDSSTSSASSSN) is disordered. Substrate is bound by residues Lys7 and Arg10. His12 functions as the Proton acceptor in the catalytic mechanism. 4 disulfide bridges follow: Cys26–Cys84, Cys40–Cys95, Cys58–Cys110, and Cys65–Cys72. Residues 41–45 (KPVBT), Lys66, and Arg85 contribute to the substrate site. The Proton donor role is filled by His119.

The protein belongs to the pancreatic ribonuclease family. As to quaternary structure, monomer. Interacts with and forms tight 1:1 complexes with RNH1. Dimerization of two such complexes may occur. Interaction with RNH1 inhibits this protein. In terms of tissue distribution, pancreas.

It is found in the secreted. The catalysed reaction is an [RNA] containing cytidine + H2O = an [RNA]-3'-cytidine-3'-phosphate + a 5'-hydroxy-ribonucleotide-3'-[RNA].. The enzyme catalyses an [RNA] containing uridine + H2O = an [RNA]-3'-uridine-3'-phosphate + a 5'-hydroxy-ribonucleotide-3'-[RNA].. Functionally, endonuclease that catalyzes the cleavage of RNA on the 3' side of pyrimidine nucleotides. Acts on single-stranded and double-stranded RNA. The chain is Ribonuclease pancreatic (RNASE1) from Boselaphus tragocamelus (Nilgai).